The following is a 459-amino-acid chain: MHNIHRRHFLKAAGAVTAGLVTANIALNANASSVAPKPRVGKSVIGLIAPKMELVRVGFIGVGERGFSHVEQFCHLEGVELKAICDTHQAVIDRAVEHIVKQNRPKPAVYTGNDLSYRELLNRDDIDIVIISTPWEWHAPMAIDTMESGKHAFVEVPLALTVEECWQLVDTAERTQKNCMMMENVNYGREELMVLNMVRQGVFGELLHGEAAYIHELRWQMKEIDHKTGSWRTYWHTKRNGNLYPTHGLGPISQYMNINRGDRFDYLTSMSSPALGRALYAKREFPADHERNQLKYINGDMSTSLIKTVKGRTIMVQHDTTTPRPYSRHNLIQGTNGVFAGFPNRIAVEHGGFGKSYHEWDMDMQKWYDKYDHPLWQRIGKEAEINGGHGGMDFVMLWRMVYCLRNGEALDQDVYDGAAWSVVNILSEQSLNNRSNSVNFPDFTRGAWEHATPLGIVGA.

Residues 1–31 (MHNIHRRHFLKAAGAVTAGLVTANIALNANA) constitute a signal peptide (tat-type signal). Residues 64–65 (ER), aspartate 86, 135–138 (WEWH), 155–156 (EV), and asparagine 184 each bind NAD(+). Residues tyrosine 213, arginine 232, 244–247 (YPTH), and tyrosine 326 contribute to the substrate site. Tyrosine 244 serves as a coordination point for NAD(+).

Belongs to the Gfo/Idh/MocA family. Glycosyl hydrolase 109 subfamily. The cofactor is NAD(+). Post-translationally, predicted to be exported by the Tat system. The position of the signal peptide cleavage has not been experimentally proven.

In terms of biological role, glycosidase. In Shewanella sp. (strain ANA-3), this protein is Glycosyl hydrolase family 109 protein 1.